The chain runs to 945 residues: Isoleucine--tRNA ligase 1 (945 aa).

The 'HIGH' region motif lies at 66 to 76 (PYANGDIHLGH). E581 contributes to the L-isoleucyl-5'-AMP binding site. Positions 622-626 (KMSKS) match the 'KMSKS' region motif. K625 contacts ATP. Positions 908, 911, 928, and 931 each coordinate Zn(2+).

It belongs to the class-I aminoacyl-tRNA synthetase family. IleS type 1 subfamily. Monomer. It depends on Zn(2+) as a cofactor.

The protein localises to the cytoplasm. The catalysed reaction is tRNA(Ile) + L-isoleucine + ATP = L-isoleucyl-tRNA(Ile) + AMP + diphosphate. In terms of biological role, catalyzes the attachment of isoleucine to tRNA(Ile). As IleRS can inadvertently accommodate and process structurally similar amino acids such as valine, to avoid such errors it has two additional distinct tRNA(Ile)-dependent editing activities. One activity is designated as 'pretransfer' editing and involves the hydrolysis of activated Val-AMP. The other activity is designated 'posttransfer' editing and involves deacylation of mischarged Val-tRNA(Ile). This is Isoleucine--tRNA ligase 1 from Burkholderia pseudomallei (strain K96243).